We begin with the raw amino-acid sequence, 333 residues long: MLAEKLQINSITPHPSVEYWSVCKVEALFETPFLELVYRATQVHRKHFNPRAIQLSTLMSIKTGGCPEDCSYCPQSARYHTGVQNQQLLDVDEIVAKAKIAKARGAGRFCMGAAWRGPKPKDIEKVTEIIKAVKSLGLETCGTFGLLQDGMAEDLKEAGLDYYNHNLDTAPEHYAEVIGTRRFDDRLSTLGKVRKAGLKVCCGGIVGMNETRKERAGLIASLANLDPQPESVPINQLVKVEGTPLADAEELDWTEFVRTIAVARITMPKSYVRLSAGRSGMTEEMQAMCFMAGANSIFYGDKLLVTDNPEEDGDQLLMAKLDLEPETAENKKL.

One can recognise a Radical SAM core domain in the interval Arg-51–Arg-278. [4Fe-4S] cluster-binding residues include Cys-66, Cys-70, and Cys-73. [2Fe-2S] cluster is bound by residues Cys-110, Cys-141, Cys-201, and Arg-273.

The protein belongs to the radical SAM superfamily. Biotin synthase family. In terms of assembly, homodimer. The cofactor is [4Fe-4S] cluster. Requires [2Fe-2S] cluster as cofactor.

The catalysed reaction is (4R,5S)-dethiobiotin + (sulfur carrier)-SH + 2 reduced [2Fe-2S]-[ferredoxin] + 2 S-adenosyl-L-methionine = (sulfur carrier)-H + biotin + 2 5'-deoxyadenosine + 2 L-methionine + 2 oxidized [2Fe-2S]-[ferredoxin]. It functions in the pathway cofactor biosynthesis; biotin biosynthesis; biotin from 7,8-diaminononanoate: step 2/2. Its function is as follows. Catalyzes the conversion of dethiobiotin (DTB) to biotin by the insertion of a sulfur atom into dethiobiotin via a radical-based mechanism. This Haemophilus influenzae (strain 86-028NP) protein is Biotin synthase.